Here is a 428-residue protein sequence, read N- to C-terminus: Histidinol dehydrogenase (428 aa).

Substrate contacts are provided by Ser232, Gln254, and His257. Zn(2+)-binding residues include Gln254 and His257. Residues Glu324 and His325 each act as proton acceptor in the active site. Substrate-binding residues include His325, Asp358, Glu412, and His417. Asp358 contributes to the Zn(2+) binding site. Position 417 (His417) interacts with Zn(2+).

It belongs to the histidinol dehydrogenase family. Zn(2+) is required as a cofactor.

It carries out the reaction L-histidinol + 2 NAD(+) + H2O = L-histidine + 2 NADH + 3 H(+). It functions in the pathway amino-acid biosynthesis; L-histidine biosynthesis; L-histidine from 5-phospho-alpha-D-ribose 1-diphosphate: step 9/9. Functionally, catalyzes the sequential NAD-dependent oxidations of L-histidinol to L-histidinaldehyde and then to L-histidine. The protein is Histidinol dehydrogenase of Thermotoga maritima (strain ATCC 43589 / DSM 3109 / JCM 10099 / NBRC 100826 / MSB8).